The sequence spans 200 residues: MSSFEKVVVIDGKGHLLGRLASIVSKQILNGQKVVVVRCEELNISGEFFRNKLKYHDYLRKATRYNKKKGPFHFRAPSRILYKAIRGMIPHKTARGKAALERLKVFEGVPPPYDKKKRVVVPQALRVLRLKPGRKYTTVGKLSSAVGWKYESVVEKLEEKRKVQSAEYYAKKKALTKKLNAAKASTAESEAAQKLAAFGY.

It belongs to the universal ribosomal protein uL13 family. As to quaternary structure, component of the large ribosomal subunit. Mature ribosomes consist of a small (40S) and a large (60S) subunit. The 40S subunit contains about 32 different proteins and 1 molecule of RNA (18S). The 60S subunit contains 45 different proteins and 3 molecules of RNA (25S, 5.8S and 5S).

Its subcellular location is the cytoplasm. Functionally, component of the ribosome, a large ribonucleoprotein complex responsible for the synthesis of proteins in the cell. The small ribosomal subunit (SSU) binds messenger RNAs (mRNAs) and translates the encoded message by selecting cognate aminoacyl-transfer RNA (tRNA) molecules. The large subunit (LSU) contains the ribosomal catalytic site termed the peptidyl transferase center (PTC), which catalyzes the formation of peptide bonds, thereby polymerizing the amino acids delivered by tRNAs into a polypeptide chain. The nascent polypeptides leave the ribosome through a tunnel in the LSU and interact with protein factors that function in enzymatic processing, targeting, and the membrane insertion of nascent chains at the exit of the ribosomal tunnel. This chain is Large ribosomal subunit protein uL13, found in Candida albicans (strain SC5314 / ATCC MYA-2876) (Yeast).